The following is an 84-amino-acid chain: Kunitz-type serine protease inhibitor B4 (84 aa).

Residues 1–24 (MSSGGLLLLLGLLTLWAELTPISG) form the signal peptide. Residues 31–81 (CNLAPESGRCRGHLRRIYYNLESNKCEVFFYGGCGGNDNNFSTWDECRHTC) enclose the BPTI/Kunitz inhibitor domain. Disulfide bonds link Cys-31/Cys-81, Cys-40/Cys-64, and Cys-56/Cys-77. N-linked (GlcNAc...) asparagine glycosylation occurs at Asn-70.

It belongs to the venom Kunitz-type family. In terms of tissue distribution, expressed by the venom gland.

The protein resides in the secreted. Serine protease inhibitor that inhibits plasmin and trypsin. This is Kunitz-type serine protease inhibitor B4 from Daboia siamensis (Eastern Russel's viper).